The following is a 319-amino-acid chain: Tyrosine--tRNA ligase (319 aa).

Residue tyrosine 35 coordinates L-tyrosine. The short motif at 40 to 48 is the 'HIGH' region element; that stretch reads PSGKIHLGH. Residues tyrosine 156, glutamine 160, aspartate 163, and glutamine 178 each contribute to the L-tyrosine site. The short motif at 213-217 is the 'KMSKS' region element; the sequence is KMSSS. Serine 216 lines the ATP pocket.

This sequence belongs to the class-I aminoacyl-tRNA synthetase family. TyrS type 3 subfamily. In terms of assembly, homodimer.

Its subcellular location is the cytoplasm. The catalysed reaction is tRNA(Tyr) + L-tyrosine + ATP = L-tyrosyl-tRNA(Tyr) + AMP + diphosphate + H(+). Functionally, catalyzes the attachment of tyrosine to tRNA(Tyr) in a two-step reaction: tyrosine is first activated by ATP to form Tyr-AMP and then transferred to the acceptor end of tRNA(Tyr). The protein is Tyrosine--tRNA ligase of Methanobrevibacter smithii (strain ATCC 35061 / DSM 861 / OCM 144 / PS).